The chain runs to 430 residues: Mitochondrial distribution and morphology protein 10 (430 aa).

Positions 215 to 234 are enriched in polar residues; that stretch reads SSSAMNPPSGTSASETNGSG. Disordered regions lie at residues 215-237 and 339-393; these read SSSA…GPSV and LGAN…GPKE.

The protein belongs to the MDM10 family. As to quaternary structure, component of the ER-mitochondria encounter structure (ERMES) or MDM complex, composed of MMM1, MDM10, MDM12 and MDM34. Associates with the mitochondrial outer membrane sorting assembly machinery SAM(core) complex.

It localises to the mitochondrion outer membrane. In terms of biological role, component of the ERMES/MDM complex, which serves as a molecular tether to connect the endoplasmic reticulum and mitochondria. Components of this complex are involved in the control of mitochondrial shape and protein biogenesis and may function in phospholipid exchange. MDM10 is involved in the late assembly steps of the general translocase of the mitochondrial outer membrane (TOM complex). Functions in the TOM40-specific route of the assembly of outer membrane beta-barrel proteins, including the association of TOM40 with the receptor TOM22 and small TOM proteins. Can associate with the SAM(core) complex as well as the MDM12-MMM1 complex, both involved in late steps of the major beta-barrel assembly pathway, that is responsible for biogenesis of all outer membrane beta-barrel proteins. May act as a switch that shuttles between both complexes and channels precursor proteins into the TOM40-specific pathway. Plays a role in mitochondrial morphology and in the inheritance of mitochondria. The protein is Mitochondrial distribution and morphology protein 10 of Chaetomium globosum (strain ATCC 6205 / CBS 148.51 / DSM 1962 / NBRC 6347 / NRRL 1970) (Soil fungus).